Consider the following 258-residue polypeptide: tRNA (guanine-N(7)-)-methyltransferase (258 aa).

The interval 1–42 (MPETPLMRDNGPVNHADQDAPAVPEEGQTKDSKGSRLHPRVT) is disordered. 4 residues coordinate S-adenosyl-L-methionine: E90, E115, D142, and D165. D165 is a catalytic residue. Residues K169, D201, and 235–238 (TKFE) contribute to the substrate site.

It belongs to the class I-like SAM-binding methyltransferase superfamily. TrmB family.

The enzyme catalyses guanosine(46) in tRNA + S-adenosyl-L-methionine = N(7)-methylguanosine(46) in tRNA + S-adenosyl-L-homocysteine. It functions in the pathway tRNA modification; N(7)-methylguanine-tRNA biosynthesis. Functionally, catalyzes the formation of N(7)-methylguanine at position 46 (m7G46) in tRNA. The protein is tRNA (guanine-N(7)-)-methyltransferase of Rhodococcus jostii (strain RHA1).